Consider the following 129-residue polypeptide: Photosystem II extrinsic protein V (129 aa).

Heme c is bound by residues cysteine 35, cysteine 38, histidine 39, and histidine 90.

This sequence belongs to the cytochrome c family. PsbV subfamily. PSII is composed of 1 copy each of membrane proteins PsbA, PsbB, PsbC, PsbD, PsbE, PsbF, PsbH, PsbI, PsbJ, PsbK, PsbL, PsbM, PsbT, PsbX, PsbY, PsbZ, Psb30/Ycf12, peripheral proteins PsbO, CyanoQ (PsbQ), PsbU, PsbV and a large number of cofactors. It forms dimeric complexes. Homodimer in crystal structure. Heme c is required as a cofactor.

Its subcellular location is the cellular thylakoid membrane. One of the extrinsic, lumenal subunits of photosystem II (PSII). PSII is a light-driven water plastoquinone oxidoreductase, using light energy to abstract electrons from H(2)O, generating a proton gradient subsequently used for ATP formation. The extrinsic proteins stabilize the structure of photosystem II oxygen-evolving complex (OEC), the ion environment of oxygen evolution and protect the OEC against heat-induced inactivation. Low-potential cytochrome c that plays a role in the OEC of PSII. The sequence is that of Photosystem II extrinsic protein V from Limnospira maxima (Arthrospira maxima).